Consider the following 80-residue polypeptide: CLAVATA3/ESR (CLE)-related protein 14 (80 aa).

Positions 1–26 are cleaved as a signal peptide; the sequence is MKVWSQRLSFLIVMIFILAGLHSSSA. A hydroxyproline mark is found at proline 71 and proline 74. A glycan (O-linked (Ara...) hydroxyproline) is linked at proline 74.

It belongs to the CLV3/ESR signal peptide family. In terms of assembly, interacts with the extracellular leucine-rich repeat region of CLV2 and PEPR2. The O-glycosylation (arabinosylation) of the hydroxyproline Pro-74 enhances binding affinity of the CLE14p peptide for its receptor. In terms of tissue distribution, mostly expressed in roots, and, to a lower extent, in seedlings and leaves. Expressed in the primary root tip under Pi deficiency.

It is found in the secreted. Its subcellular location is the extracellular space. In terms of biological role, extracellular signal peptide that regulates cell fate. Represses root apical meristem maintenance. Acts as an elicitor of the root meristem differentiation through the CLV2/CRN complex signaling pathway. Inhibits irreversibly root growth by reducing cell division rates in the root apical meristem. Regulates the transition of protophloem cells from proliferation to differentiation, thus impinging on postembryonic growth capacity of the root meristem; this signaling pathway requires CRN and CLV2. This chain is CLAVATA3/ESR (CLE)-related protein 14, found in Arabidopsis thaliana (Mouse-ear cress).